The sequence spans 1202 residues: Calmodulin-binding transcription activator 2 (1202 aa).

A DNA-binding region (CG-1) is located at residues 30–155; sequence RCPLLPPERL…YLNVPALEDC (126 aa). Positions 79 to 86 match the Nuclear localization signal motif; the sequence is RKKVKYRK. 3 disordered regions span residues 263–322, 361–409, and 421–491; these read SIPH…SRGG, GTEP…AHTP, and PQAA…LFGG. Residues 270–283 are compositionally biased toward pro residues; it reads PEPPPLIAPLPPEL. Composition is skewed to low complexity over residues 289–299 and 313–322; these read SPSSSSSSSSS and TSRGGSSRGG. 2 stretches are compositionally biased toward pro residues: residues 365-374 and 460-476; these read SAPPAPPSPA and PPIP…PAPL. The 79-residue stretch at 537-615 folds into the IPT/TIG domain; the sequence is DFSPEWSYPE…LSASVLFEYR (79 aa). 3 ANK repeats span residues 712-745, 757-787, and 791-821; these read MSLL…DLEQ, CTPL…SIPD, and RLPL…SVEP. 2 disordered regions span residues 817–874 and 906–929; these read PSVE…ASEM and PLSS…ADSP. Low complexity-rich tracts occupy residues 826-846 and 906-917; these read SPPS…SELS and PLSSLPALPPAS. 2 IQ domains span residues 1049-1078 and 1102-1131; these read YEAA…AAVI and TQAA…AVLI.

It belongs to the CAMTA family. In terms of assembly, may interact with calmodulin. In terms of tissue distribution, detected in brain. Expressed at constant levels throughout the cell cycle in neuroblastoma cell lines.

The protein localises to the nucleus. Functionally, transcription activator. May act as tumor suppressor. The sequence is that of Calmodulin-binding transcription activator 2 (CAMTA2) from Homo sapiens (Human).